Consider the following 202-residue polypeptide: Kunitz-type protein bli-5 (202 aa).

The signal sequence occupies residues Met-1 to Cys-20. Residues Cys-135 to Cys-184 form the BPTI/Kunitz inhibitor domain. Disulfide bonds link Cys-135-Cys-184 and Cys-158-Cys-180.

As to expression, expressed in larval and adult hypodermis, hermaphrodite vulva and adult excretory cell and duct.

Functionally, appears to lack serine protease inhibitor activity in vitro when tested with bovine pancreatic alpha-chymotrypsin and elastase. Involved in cuticle biosynthesis. In Caenorhabditis elegans, this protein is Kunitz-type protein bli-5.